Reading from the N-terminus, the 516-residue chain is 7-chloro-L-tryptophan 6-halogenase KtzR (516 aa).

Residues Gly-6, Thr-8, Ala-9, Glu-42, and Ala-43 each contribute to the FAD site. The active site involves Lys-71. An FAD-binding site is contributed by Val-195. Chloride contacts are provided by Thr-357 and Gly-358. Residue Ile-359 participates in FAD binding.

It belongs to the flavin-dependent halogenase family. Bacterial tryptophan halogenase subfamily.

The catalysed reaction is 7-chloro-L-tryptophan + FADH2 + chloride + O2 = 6,7-dichloro-L-tryptophan + FAD + 2 H2O. In terms of biological role, involved in the biosynthesis of kutznerides, actinomycete-derived antifungal and antimicrobial cyclic hexadepsipeptides. Together with KtzQ, catalyzes the regiospecific dichlorination of L-tryptophan (L-Trp) to produce 6,7-dichloro-L-tryptophan. KtzR catalyzes the chlorination of 7-chloro-L-tryptophan at C6 position to yield 6,7-dichloro-L-tryptophan. Can also use L-Trp as substrate and form 6-chloro-L-tryptophan, but has a 120-fold preference for 7-chloro-L-tryptophan over L-Trp. Cannot use piperazic acid or gamma,delta-dehydropiperazic acid. The polypeptide is 7-chloro-L-tryptophan 6-halogenase KtzR (Kutzneria sp. (strain 744)).